The chain runs to 346 residues: Protein RecA (346 aa).

An ATP-binding site is contributed by 67 to 74 (GPESSGKT).

It belongs to the RecA family.

The protein localises to the cytoplasm. Can catalyze the hydrolysis of ATP in the presence of single-stranded DNA, the ATP-dependent uptake of single-stranded DNA by duplex DNA, and the ATP-dependent hybridization of homologous single-stranded DNAs. It interacts with LexA causing its activation and leading to its autocatalytic cleavage. The protein is Protein RecA of Mycobacterium ulcerans (strain Agy99).